An 820-amino-acid polypeptide reads, in one-letter code: Probable ATP-dependent RNA helicase DDX23 (820 aa).

Residues 1 to 42 (MAGELADKKDRDASPSKEERKRSRTPDRERDRDRDRKSSPSK) are compositionally biased toward basic and acidic residues. Positions 1–244 (MAGELADKKD…QKIREEKDKS (244 aa)) are disordered. 2 positions are modified to phosphoserine: Ser14 and Ser16. Residues 43–65 (DRKRHRSRDRRRGGSRSRSRSRS) show a composition bias toward basic residues. The span at 66–105 (KSAERERRHKERERDKERDRNKKDRDRDKDGHRRDKDRKR) shows a compositional bias: basic and acidic residues. Phosphoserine occurs at positions 107 and 109. Composition is skewed to basic and acidic residues over residues 112-137 (RGKD…DKKP), 147-226 (LLAK…RETN), and 233-244 (GRQKIREEKDKS). The short motif at 391–419 (RSWKDSSLPPHILEVIDKCGYKEPTPIQR) is the Q motif element. One can recognise a Helicase ATP-binding domain in the interval 422-627 (IPIGLQNRDI…RSYLRRPAVV (206 aa)). 435-442 (AETGSGKT) serves as a coordination point for ATP. The short motif at 549–552 (DEAD) is the DEAD box element. The 149-residue stretch at 651 to 799 (KRKKLLAILE…SCPPELANHP (149 aa)) folds into the Helicase C-terminal domain. Glycyl lysine isopeptide (Lys-Gly) (interchain with G-Cter in SUMO2) cross-links involve residues Lys686 and Lys811.

The protein belongs to the DEAD box helicase family. DDX23/PRP28 subfamily. The phosphorylated form (by SRPK2) is a component of the U4/U6-U5 tri-snRNP complex composed of the U4, U6 and U5 snRNAs and at least PRPF3, PRPF4, PRPF6, PRPF8, PRPF31, SNRNP200, TXNL4A, WDR57, SNRNP40, DDX23, CD2BP2, PPIH, SNU13, EFTUD2, SART1 and USP39. Identified in the spliceosome C complex. Interacts with ERBB4. Interacts with ERCC6. In terms of processing, in vitro phosphorylated by CLK1 and U1 snRNP-associated protein kinase. Phosphorylated by SRPK2 and this phosphorylation is required for its association with the tri-snRNP (U4/U6-U5 tri-small nuclear ribonucleoproteins) and subsequent spliceosomal B complex formation. May be phosphorylated by SRPK2 on Ser residues in the SR domain; the phosphorylation is required for the removal of inappropriate R-loops during transcription.

Its subcellular location is the nucleus. It is found in the chromosome. It carries out the reaction ATP + H2O = ADP + phosphate + H(+). Involved in pre-mRNA splicing and its phosphorylated form (by SRPK2) is required for spliceosomal B complex formation. Independently of its spliceosome formation function, required for the suppression of incorrect R-loops formed during transcription; R-loops are composed of a DNA:RNA hybrid and the associated non-template single-stranded DNA. The chain is Probable ATP-dependent RNA helicase DDX23 from Pongo abelii (Sumatran orangutan).